The following is a 275-amino-acid chain: Nitrogenase iron protein 3 (275 aa).

9-16 (GKGGIGKS) lines the ATP pocket. Cys97 contributes to the [4Fe-4S] cluster binding site. ADP-ribosylarginine; by dinitrogenase reductase ADP-ribosyltransferase is present on Arg100. Cys132 lines the [4Fe-4S] cluster pocket.

Belongs to the NifH/BchL/ChlL family. In terms of assembly, homodimer. Requires [4Fe-4S] cluster as cofactor. The reversible ADP-ribosylation of Arg-100 inactivates the nitrogenase reductase and regulates nitrogenase activity.

It catalyses the reaction N2 + 8 reduced [2Fe-2S]-[ferredoxin] + 16 ATP + 16 H2O = H2 + 8 oxidized [2Fe-2S]-[ferredoxin] + 2 NH4(+) + 16 ADP + 16 phosphate + 6 H(+). Its function is as follows. The key enzymatic reactions in nitrogen fixation are catalyzed by the nitrogenase complex, which has 2 components: the iron protein and the molybdenum-iron protein. The sequence is that of Nitrogenase iron protein 3 (nifH3) from Clostridium pasteurianum.